The chain runs to 424 residues: Histidine--tRNA ligase (424 aa).

It belongs to the class-II aminoacyl-tRNA synthetase family. As to quaternary structure, homodimer.

It localises to the cytoplasm. It carries out the reaction tRNA(His) + L-histidine + ATP = L-histidyl-tRNA(His) + AMP + diphosphate + H(+). This Shewanella halifaxensis (strain HAW-EB4) protein is Histidine--tRNA ligase.